Reading from the N-terminus, the 375-residue chain is Period circadian protein (375 aa).

3 disordered regions span residues 27–119, 140–189, and 219–255; these read VTAP…VPPV, KHRE…WEGE, and KCQA…QYTQ. Positions 69–91 are enriched in low complexity; it reads SGNFTTGSNLHMSSVTNTSNAGT. Residues 92–113 show a composition bias toward gly residues; it reads GTSGTGNSGGGGGGGGGAGPGN. The span at 145-156 shows a compositional bias: basic and acidic residues; sequence RGRSGEKNKKSA. Positions 224–243 are enriched in gly residues; that stretch reads GAGGGGSGSVGGTGNIGSGG. Polar residues predominate over residues 245-255; sequence NAQPSTNQYTQ.

Forms a heterodimer with timeless (TIM); the complex then translocates into the nucleus. In terms of processing, phosphorylated with a circadian rhythmicity, probably by the double-time protein (dbt). Phosphorylation could be implicated in the stability of per monomer and in the formation of heterodimer per-tim.

It is found in the nucleus. It localises to the cytoplasm. The protein resides in the perinuclear region. Its function is as follows. Essential for biological clock functions. Determines the period length of circadian and ultradian rhythms; an increase in PER dosage leads to shortened circadian rhythms and a decrease leads to lengthened circadian rhythms. Essential for the circadian rhythmicity of locomotor activity, eclosion behavior, and for the rhythmic component of the male courtship song that originates in the thoracic nervous system. The biological cycle depends on the rhythmic formation and nuclear localization of the TIM-PER complex. Light induces the degradation of TIM, which promotes elimination of PER. Nuclear activity of the heterodimer coordinatively regulates PER and TIM transcription through a negative feedback loop. Behaves as a negative element in circadian transcriptional loop. Does not appear to bind DNA, suggesting indirect transcriptional inhibition. This is Period circadian protein (per) from Drosophila sucinea (Fruit fly).